The sequence spans 520 residues: Hydroxymethylglutaryl-CoA synthase, cytoplasmic (520 aa).

Ser-4 bears the Phosphoserine mark. (3S)-3-hydroxy-3-methylglutaryl-CoA contacts are provided by Asp-43 and Ala-44. A CoA-binding site is contributed by 44–46; the sequence is AGK. An N6-acetyllysine modification is found at Lys-46. Glu-95 functions as the Proton donor/acceptor in the catalytic mechanism. Residues Cys-129, Asn-167, Thr-171, Ser-221, and His-264 each contribute to the (3S)-3-hydroxy-3-methylglutaryl-CoA site. Cys-129 acts as the Acyl-thioester intermediate in catalysis. Asn-167 contributes to the CoA binding site. A CoA-binding site is contributed by Ser-221. The Proton donor/acceptor role is filled by His-264. The CoA site is built by Lys-269 and Lys-273. 3 residues coordinate (3S)-3-hydroxy-3-methylglutaryl-CoA: Lys-273, Asn-343, and Ser-377. Lys-273 carries the post-translational modification N6-acetyllysine. Residues 486–520 are disordered; the sequence is SNTATEHIPSPAKKVPRLPATAAESESAVISNGEH. Residues Ser-495 and Ser-516 each carry the phosphoserine modification.

Belongs to the thiolase-like superfamily. HMG-CoA synthase family. As to quaternary structure, homodimer.

The protein resides in the cytoplasm. It carries out the reaction acetoacetyl-CoA + acetyl-CoA + H2O = (3S)-3-hydroxy-3-methylglutaryl-CoA + CoA + H(+). It functions in the pathway metabolic intermediate biosynthesis; (R)-mevalonate biosynthesis; (R)-mevalonate from acetyl-CoA: step 2/3. Functionally, this enzyme condenses acetyl-CoA with acetoacetyl-CoA to form HMG-CoA, which is converted by HMG-CoA reductase (HMGCR) into mevalonate, a precursor for cholesterol synthesis. The polypeptide is Hydroxymethylglutaryl-CoA synthase, cytoplasmic (Cricetulus griseus (Chinese hamster)).